The chain runs to 30 residues: Kappa-sparatoxin-Hv1b (30 aa).

Disulfide bonds link cysteine 3-cysteine 17, cysteine 10-cysteine 22, and cysteine 16-cysteine 26. Tryptophan 30 carries the tryptophan amide modification.

This sequence belongs to the neurotoxin 10 (Hwtx-1) family. 19 (HpTX2) subfamily. In terms of tissue distribution, expressed by the venom gland.

Its subcellular location is the secreted. Its function is as follows. Inhibitor of voltage-gated potassium channels of the Kv4/KCND family. Inhibition of Kv4.3/KCND3 and Kv4.2/KCND2 is strongly voltage-dependent, while inhibition of Kv4.1/KCND1 shows less voltage-dependence. Its binding site may be near the potassium channel voltage sensor. Also blocks calcium channels. This Heteropoda venatoria (Brown huntsman spider) protein is Kappa-sparatoxin-Hv1b.